The primary structure comprises 255 residues: 3-deoxy-manno-octulosonate cytidylyltransferase (255 aa).

This sequence belongs to the KdsB family.

It is found in the cytoplasm. It carries out the reaction 3-deoxy-alpha-D-manno-oct-2-ulosonate + CTP = CMP-3-deoxy-beta-D-manno-octulosonate + diphosphate. It functions in the pathway nucleotide-sugar biosynthesis; CMP-3-deoxy-D-manno-octulosonate biosynthesis; CMP-3-deoxy-D-manno-octulosonate from 3-deoxy-D-manno-octulosonate and CTP: step 1/1. It participates in bacterial outer membrane biogenesis; lipopolysaccharide biosynthesis. Its function is as follows. Activates KDO (a required 8-carbon sugar) for incorporation into bacterial lipopolysaccharide in Gram-negative bacteria. This is 3-deoxy-manno-octulosonate cytidylyltransferase from Glaesserella parasuis serovar 5 (strain SH0165) (Haemophilus parasuis).